A 501-amino-acid polypeptide reads, in one-letter code: Geissoschizine oxidase (501 aa).

A helical membrane pass occupies residues 1–21 (MEFSFSSPLLYILYFLLFFIV). C442 provides a ligand contact to heme.

Belongs to the cytochrome P450 family. Requires heme as cofactor.

It is found in the membrane. It catalyses the reaction (19E)-geissoschizine + reduced [NADPH--hemoprotein reductase] + O2 = akuammicine + formate + oxidized [NADPH--hemoprotein reductase] + H2O + H(+). The protein operates within alkaloid biosynthesis. A cytochrome P450 monooxygenase involved in the biosynthesis of strychnos monoterpene indole alkaloids (MIAs) natural products, compounds with effects on glucose absorption. Catalyzes the conversion of geissoschizine to akuammicine. In Alstonia scholaris (Dogbane), this protein is Geissoschizine oxidase.